The chain runs to 204 residues: Urease accessory protein UreG (204 aa).

Position 12–19 (12–19 (GPVGSGKT)) interacts with GTP.

Belongs to the SIMIBI class G3E GTPase family. UreG subfamily. Homodimer. UreD, UreF and UreG form a complex that acts as a GTP-hydrolysis-dependent molecular chaperone, activating the urease apoprotein by helping to assemble the nickel containing metallocenter of UreC. The UreE protein probably delivers the nickel.

It localises to the cytoplasm. Functionally, facilitates the functional incorporation of the urease nickel metallocenter. This process requires GTP hydrolysis, probably effectuated by UreG. This Pseudomonas fluorescens (strain ATCC BAA-477 / NRRL B-23932 / Pf-5) protein is Urease accessory protein UreG.